Reading from the N-terminus, the 382-residue chain is Gibberellin 2-beta-dioxygenase 1 (382 aa).

A Fe2OG dioxygenase domain is found at 189-321 (DSDCLLRINH…RLSTIYFASP (133 aa)). Tyr199 lines the 2-oxoglutarate pocket. His241, Asp243, and His302 together coordinate Fe cation. Residues Arg312 and Ser314 each coordinate 2-oxoglutarate.

It belongs to the iron/ascorbate-dependent oxidoreductase family. GA2OX subfamily. It depends on L-ascorbate as a cofactor. Requires Fe(2+) as cofactor. Expressed in roots, shoot apex, and in the basal region of leaf primordia and young leaves.

The catalysed reaction is gibberellin A1 + 2-oxoglutarate + O2 = gibberellin A8 + succinate + CO2. Its function is as follows. Catalyzes the 2-beta-hydroxylation of several biologically active gibberellins, leading to the homeostatic regulation of their endogenous level. Catabolism of gibberellins (GAs) plays a central role in plant development. Controls the level of bioactive GAs in the shoot apical meristem, which regulates the vegetative to reproductive phase transition. In vitro, converts GA1, GA4, GA9, GA20, and GA44 to the corresponding 2-beta-hydroxylated products GA8, GA34, GA51, GA29, and GA98, respectively. This chain is Gibberellin 2-beta-dioxygenase 1, found in Oryza sativa subsp. japonica (Rice).